A 254-amino-acid chain; its full sequence is Thiazole synthase (254 aa).

Lysine 95 acts as the Schiff-base intermediate with DXP in catalysis. 1-deoxy-D-xylulose 5-phosphate contacts are provided by residues glycine 156, 182–183, and 204–205; these read AG and NT.

Belongs to the ThiG family. Homotetramer. Forms heterodimers with either ThiH or ThiS.

The protein resides in the cytoplasm. The catalysed reaction is [ThiS sulfur-carrier protein]-C-terminal-Gly-aminoethanethioate + 2-iminoacetate + 1-deoxy-D-xylulose 5-phosphate = [ThiS sulfur-carrier protein]-C-terminal Gly-Gly + 2-[(2R,5Z)-2-carboxy-4-methylthiazol-5(2H)-ylidene]ethyl phosphate + 2 H2O + H(+). It participates in cofactor biosynthesis; thiamine diphosphate biosynthesis. Functionally, catalyzes the rearrangement of 1-deoxy-D-xylulose 5-phosphate (DXP) to produce the thiazole phosphate moiety of thiamine. Sulfur is provided by the thiocarboxylate moiety of the carrier protein ThiS. In vitro, sulfur can be provided by H(2)S. The polypeptide is Thiazole synthase (Shewanella sp. (strain W3-18-1)).